The following is a 287-amino-acid chain: 4,4'-diapophytoene synthase (287 aa).

(2E,6E)-farnesyl diphosphate-binding positions include 18 to 21 (HSKS), Tyr41, and Arg45. Mg(2+)-binding residues include Asp48 and Asp52. Gln165 provides a ligand contact to (2E,6E)-farnesyl diphosphate. Asn168 serves as a coordination point for Mg(2+). Arg171 lines the (2E,6E)-farnesyl diphosphate pocket. Asp172 is a Mg(2+) binding site. Tyr248 contributes to the (2E,6E)-farnesyl diphosphate binding site.

The protein belongs to the phytoene/squalene synthase family. CrtM subfamily. The cofactor is Mg(2+).

The catalysed reaction is 2 (2E,6E)-farnesyl diphosphate = 15-cis-4,4'-diapophytoene + 2 diphosphate. It functions in the pathway carotenoid biosynthesis; staphyloxanthin biosynthesis; staphyloxanthin from farnesyl diphosphate: step 1/5. In terms of biological role, involved in the biosynthesis of the yellow-orange carotenoid staphyloxanthin, which plays a role in the virulence via its protective function against oxidative stress. Catalyzes the head-to-head condensation of two molecules of farnesyl diphosphate (FPP) into the colorless C(30) carotenoid 4,4'-diapophytoene (dehydrosqualene). This Staphylococcus aureus protein is 4,4'-diapophytoene synthase.